Consider the following 319-residue polypeptide: ATP-dependent 6-phosphofructokinase (319 aa).

Residue G11 participates in ATP binding. 21 to 25 is a binding site for ADP; it reads RSIAR. Residues 72–73 and 102–105 contribute to the ATP site; these read RC and GDGS. D103 is a Mg(2+) binding site. 125–127 is a binding site for substrate; sequence TID. D127 (proton acceptor) is an active-site residue. R154 is a binding site for ADP. Substrate is bound by residues R162 and 169 to 171; that span reads MGR. Residues 185–187, R211, and 213–215 each bind ADP; these read GAE and KLH. Residues E222, K243, and 249–252 contribute to the substrate site; that span reads HVQR.

Belongs to the phosphofructokinase type A (PFKA) family. ATP-dependent PFK group I subfamily. Prokaryotic clade 'B1' sub-subfamily. As to quaternary structure, homotetramer. The cofactor is Mg(2+).

It is found in the cytoplasm. It carries out the reaction beta-D-fructose 6-phosphate + ATP = beta-D-fructose 1,6-bisphosphate + ADP + H(+). It participates in carbohydrate degradation; glycolysis; D-glyceraldehyde 3-phosphate and glycerone phosphate from D-glucose: step 3/4. With respect to regulation, allosterically activated by ADP and other diphosphonucleosides, and allosterically inhibited by phosphoenolpyruvate. In terms of biological role, catalyzes the phosphorylation of D-fructose 6-phosphate to fructose 1,6-bisphosphate by ATP, the first committing step of glycolysis. This is ATP-dependent 6-phosphofructokinase from Finegoldia magna (strain ATCC 29328 / DSM 20472 / WAL 2508) (Peptostreptococcus magnus).